The chain runs to 316 residues: Glutathione synthetase (316 aa).

The ATP-grasp domain occupies 125–310 (KLFTAWFSDL…ITGMLMDAIE (186 aa)). ATP is bound at residue 151-207 (WEKHSDIILKPLDGMGGASIFRVKEGDPNLGVIAETLTEHGTRYCMAQNYLPAIKDG). Residues Glu-281 and Asn-283 each coordinate Mg(2+).

It belongs to the prokaryotic GSH synthase family. It depends on Mg(2+) as a cofactor. The cofactor is Mn(2+).

It catalyses the reaction gamma-L-glutamyl-L-cysteine + glycine + ATP = glutathione + ADP + phosphate + H(+). It participates in sulfur metabolism; glutathione biosynthesis; glutathione from L-cysteine and L-glutamate: step 2/2. The protein is Glutathione synthetase of Escherichia coli O6:H1 (strain CFT073 / ATCC 700928 / UPEC).